Consider the following 455-residue polypeptide: tRNA modification GTPase MnmE (455 aa).

Residue Arg-22 coordinates (6S)-5-formyl-5,6,7,8-tetrahydrofolate. The tract at residues 43 to 67 (RRATRAALRSPPSGPGPTGPGPEEG) is disordered. Positions 92 and 132 each coordinate (6S)-5-formyl-5,6,7,8-tetrahydrofolate. A TrmE-type G domain is found at 228–381 (GLQVAVVGAP…LEAALESRAR (154 aa)). Asn-238 lines the K(+) pocket. Residues 238-243 (NVGKSS), 257-263 (SDIAGTT), and 282-285 (DTAG) contribute to the GTP site. A Mg(2+)-binding site is contributed by Ser-242. The K(+) site is built by Ser-257, Ile-259, and Thr-262. Thr-263 serves as a coordination point for Mg(2+). Lys-455 contacts (6S)-5-formyl-5,6,7,8-tetrahydrofolate.

Belongs to the TRAFAC class TrmE-Era-EngA-EngB-Septin-like GTPase superfamily. TrmE GTPase family. As to quaternary structure, homodimer. Heterotetramer of two MnmE and two MnmG subunits. Requires K(+) as cofactor.

It is found in the cytoplasm. Exhibits a very high intrinsic GTPase hydrolysis rate. Involved in the addition of a carboxymethylaminomethyl (cmnm) group at the wobble position (U34) of certain tRNAs, forming tRNA-cmnm(5)s(2)U34. The polypeptide is tRNA modification GTPase MnmE (Rhodospirillum rubrum (strain ATCC 11170 / ATH 1.1.1 / DSM 467 / LMG 4362 / NCIMB 8255 / S1)).